An 898-amino-acid polypeptide reads, in one-letter code: Chloride channel protein 2 (898 aa).

Residue Ala2 is modified to N-acetylalanine. Residues 2–87 lie on the Cytoplasmic side of the membrane; sequence AAAAAEEGME…RCHKFLVSRV (86 aa). The segment at 16–34 is essential for channel gating by both voltage and cell volume; that stretch reads QYEQTLMYGRYTQDLGAFA. The residue at position 20 (Thr20) is a Phosphothreonine. The tract at residues 36–49 is modulates channel gating by both voltage and cell volume; the sequence is EEAARIRLGGPEPW. A run of 2 helical transmembrane segments spans residues 88 to 121 and 130 to 155; these read GEDW…AQQW and ILLQ…TQIL. The short motif at 161-165 is the Selectivity filter part_1 element; sequence GSGIP. Ser162 lines the chloride pocket. Residues 164-171 constitute an intramembrane region (helical); sequence IPEMKTIL. Transmembrane regions (helical) follow at residues 180–198 and 205–223; these read LTLK…ALGS and EGPF…SKFL. Residues 203–207 carry the Selectivity filter part_2 motif; sequence GKEGP. 2 intramembrane regions (helical) span residues 239 to 251 and 255 to 263; these read MLAA…VGCC and PIGGVLFSI. A run of 5 helical transmembrane segments spans residues 275–295, 321–349, 358–377, 429–449, and 457–480; these read YWRG…LAVW, LPAF…VQVM, FLMR…ISTL, ANVF…SALA, and GAFM…MAAW. Positions 457–461 match the Selectivity filter part_3 motif; the sequence is GAFMP. Residue Phe459 coordinates chloride. Residues 497 to 511 constitute an intramembrane region (helical); sequence GGYAVVGAAALAGAV. The note=Loop between two helices intramembrane region spans 512–513; sequence TH. An intramembrane region (helical) is located at residues 514–525; it reads TVSTAVIVFELT. The note=Loop between two helices intramembrane region spans 526-530; that stretch reads GQIAH. The helical transmembrane segment at 531–548 threads the bilayer; sequence ILPVMIAVILANAVAQSL. At 549-898 the chain is on the cytoplasmic side; sequence QPSLYDSIIR…SPSDSDDKCQ (350 aa). A chloride-binding site is contributed by Tyr553. The region spanning 584-642 is the CBS 1 domain; the sequence is MVRDVPHVALSCTFRDLRLALHRTKGRMLALVESPESMILLGSIERSQVVALLGAQLSP. Disordered regions lie at residues 643–672 and 686–717; these read ARRR…PEAS and AARG…TGSA. The span at 705 to 717 shows a compositional bias: polar residues; sequence VTRNLGESPTGSA. Phosphoserine occurs at positions 712 and 758. The CBS 2 domain occupies 790–850; it reads IDPAPFQLVE…GSVTAQGVKV (61 aa). The Basolateral membrane sorting motif lies at 812-813; sequence LL. Positions 856-898 are disordered; that stretch reads SFRDSATSSSDTETTEVHALWGPHSRHGLPREGSPSDSDDKCQ.

The protein belongs to the chloride channel (TC 2.A.49) family. ClC-2/CLCN2 subfamily. As to quaternary structure, homodimer. Interacts with auxiliary subunit HEPACAM. Phosphorylated. Activated by dephosphorylation. In terms of tissue distribution, ubiquitously expressed. Moderately expressed in aortic and coronary vascular smooth muscle cells and expressed at a low level in aortic endothelial cells. Expressed in the adrenal gland, predominantly in the zona glomerulosa. Expressed in white mater perivascular astrocytes and ependymal cells (at protein level).

It is found in the cell membrane. It localises to the basolateral cell membrane. Its subcellular location is the cell projection. The protein localises to the dendritic spine membrane. The protein resides in the axon. The enzyme catalyses chloride(in) = chloride(out). It catalyses the reaction thiocyanate(in) = thiocyanate(out). The catalysed reaction is bromide(in) = bromide(out). It carries out the reaction nitrate(in) = nitrate(out). The enzyme catalyses iodide(out) = iodide(in). With respect to regulation, common gate kinetics are down-regulated by intracellular ATP. Inhibited by AK-42, a derivative of meclofenamate. Inhibited by Cd(2+). Inhibited by Zn(2+) and PKC activation. Inhibited at acidic pH. CCLN2:HEPACAM channel conductance is up-regulated upon hypo-osmolarity. Its function is as follows. Voltage-gated and osmosensitive chloride channel. Forms a homodimeric channel where each subunit has its own ion conduction pathway. Conducts double-barreled currents controlled by two types of gates, two fast glutamate gates that control each subunit independently and a slow common gate that opens and shuts off both subunits simultaneously. Displays inward rectification currents activated upon membrane hyperpolarization and extracellular hypotonicity. Contributes to chloride conductance involved in neuron excitability. In hippocampal neurons, generates a significant part of resting membrane conductance and provides an additional chloride efflux pathway to prevent chloride accumulation in dendrites upon GABA receptor activation. In glia, associates with the auxiliary subunit HEPACAM/GlialCAM at astrocytic processes and myelinated fiber tracts where it may regulate transcellular chloride flux buffering extracellular chloride and potassium concentrations. Regulates aldosterone production in adrenal glands. The opening of CLCN2 channels at hyperpolarized membrane potentials in the glomerulosa causes cell membrane depolarization, activation of voltage-gated calcium channels and increased expression of aldosterone synthase, the rate-limiting enzyme for aldosterone biosynthesis. Contributes to chloride conductance in retinal pigment epithelium involved in phagocytosis of shed photoreceptor outer segments and photoreceptor renewal. Conducts chloride currents at the basolateral membrane of epithelial cells with a role in chloride reabsorption rather than secretion. Permeable to small monovalent anions with chloride &gt; thiocyanate &gt; bromide &gt; nitrate &gt; iodide ion selectivity. In Homo sapiens (Human), this protein is Chloride channel protein 2.